The primary structure comprises 335 residues: Holliday junction branch migration complex subunit RuvB (335 aa).

The segment at 4–184 is large ATPase domain (RuvB-L); it reads ADRIISTSAK…FGIVQRLEFY (181 aa). Residues isoleucine 23, arginine 24, glycine 65, lysine 68, threonine 69, threonine 70, 131-133, arginine 174, tyrosine 184, and arginine 221 contribute to the ATP site; that span reads EDY. Threonine 69 is a Mg(2+) binding site. The interval 185–255 is small ATPAse domain (RuvB-S); it reads AVEDLTSIVA…SAKAALLMLD (71 aa). The tract at residues 258–335 is head domain (RuvB-H); the sequence is DAGFDYLDRK…RYFGLEKLTE (78 aa). The DNA site is built by arginine 294, arginine 313, and arginine 318.

This sequence belongs to the RuvB family. Homohexamer. Forms an RuvA(8)-RuvB(12)-Holliday junction (HJ) complex. HJ DNA is sandwiched between 2 RuvA tetramers; dsDNA enters through RuvA and exits via RuvB. An RuvB hexamer assembles on each DNA strand where it exits the tetramer. Each RuvB hexamer is contacted by two RuvA subunits (via domain III) on 2 adjacent RuvB subunits; this complex drives branch migration. In the full resolvosome a probable DNA-RuvA(4)-RuvB(12)-RuvC(2) complex forms which resolves the HJ.

It is found in the cytoplasm. The catalysed reaction is ATP + H2O = ADP + phosphate + H(+). In terms of biological role, the RuvA-RuvB-RuvC complex processes Holliday junction (HJ) DNA during genetic recombination and DNA repair, while the RuvA-RuvB complex plays an important role in the rescue of blocked DNA replication forks via replication fork reversal (RFR). RuvA specifically binds to HJ cruciform DNA, conferring on it an open structure. The RuvB hexamer acts as an ATP-dependent pump, pulling dsDNA into and through the RuvAB complex. RuvB forms 2 homohexamers on either side of HJ DNA bound by 1 or 2 RuvA tetramers; 4 subunits per hexamer contact DNA at a time. Coordinated motions by a converter formed by DNA-disengaged RuvB subunits stimulates ATP hydrolysis and nucleotide exchange. Immobilization of the converter enables RuvB to convert the ATP-contained energy into a lever motion, pulling 2 nucleotides of DNA out of the RuvA tetramer per ATP hydrolyzed, thus driving DNA branch migration. The RuvB motors rotate together with the DNA substrate, which together with the progressing nucleotide cycle form the mechanistic basis for DNA recombination by continuous HJ branch migration. Branch migration allows RuvC to scan DNA until it finds its consensus sequence, where it cleaves and resolves cruciform DNA. In Pasteurella multocida (strain Pm70), this protein is Holliday junction branch migration complex subunit RuvB.